A 3564-amino-acid polypeptide reads, in one-letter code: Sushi, von Willebrand factor type A, EGF and pentraxin domain-containing protein 1 (3564 aa).

Positions 1 to 17 (MWTRLAFCCWALALVSG) are cleaved as a signal peptide. In terms of domain architecture, VWFA spans 84–265 (ELVFLVDESS…LARRALHEDL (182 aa)). The N-linked (GlcNAc...) asparagine glycan is linked to Asn-187. 3 consecutive Sushi domains span residues 377–436 (VHCP…FCRV), 437–496 (RTCP…RCVE), and 497–561 (RHCA…VCKD). 6 disulfide bridges follow: Cys-379/Cys-421, Cys-407/Cys-434, Cys-439/Cys-481, Cys-467/Cys-494, Cys-499/Cys-544, and Cys-530/Cys-559. 2 consecutive HYR domains span residues 560–644 (KDVE…KVID) and 645–724 (VEPP…VIKG). Residues 725-789 (SPCEVPFTPV…YSTEWPDCAI (65 aa)) enclose the Sushi 4 domain. Disulfide bonds link Cys-727-Cys-769, Cys-753-Cys-787, Cys-1192-Cys-1203, Cys-1197-Cys-1212, Cys-1214-Cys-1223, Cys-1230-Cys-1241, Cys-1235-Cys-1250, Cys-1252-Cys-1261, Cys-1268-Cys-1279, Cys-1273-Cys-1288, Cys-1290-Cys-1299, Cys-1306-Cys-1317, Cys-1311-Cys-1326, Cys-1328-Cys-1337, Cys-1344-Cys-1355, Cys-1349-Cys-1364, Cys-1366-Cys-1375, Cys-1382-Cys-1393, Cys-1387-Cys-1402, and Cys-1404-Cys-1413. Positions 1188 to 1224 (VFHECFLNPCHNSGTCQQLGRGYVCLCPPGYTGLKCE) constitute an EGF-like 1 domain. One can recognise an EGF-like 2; calcium-binding domain in the interval 1226-1262 (DIDECSSLPCLNGGICRDKVGGFTCECSSGYTGQICE). Positions 1264–1300 (NINECSSSPCLNKGTCTDGLASYRCTCVSGYVGVHCE) constitute an EGF-like 3; calcium-binding domain. In terms of domain architecture, EGF-like 4; calcium-binding spans 1302–1338 (DVNECQSSPCLNNAVCKDQVGGFSCKCPPGFLGTRCE). One can recognise an EGF-like 5; calcium-binding domain in the interval 1340–1376 (NVDECLSQPCQNGATCKDGANSFRCQCPAGFTGPHCE). Positions 1378 to 1414 (NINECQSNPCRNQATCVDELNSYSCKCRPGFSGRRCE) constitute an EGF-like 6; calcium-binding domain. In terms of domain architecture, Pentraxin (PTX) spans 1419-1623 (SGFNLDFEVS…VKVDSSSIFC (205 aa)). 2 consecutive Sushi domains span residues 1624–1682 (SDCP…HCER) and 1683–1740 (IRCG…SCLD). 35 disulfide bridges follow: Cys-1626/Cys-1667, Cys-1653/Cys-1680, Cys-1685/Cys-1725, Cys-1711/Cys-1738, Cys-1744/Cys-1756, Cys-1750/Cys-1765, Cys-1767/Cys-1778, Cys-1784/Cys-1824, Cys-1810/Cys-1837, Cys-1842/Cys-1882, Cys-1868/Cys-1895, Cys-1900/Cys-1940, Cys-1926/Cys-1953, Cys-1958/Cys-1998, Cys-1984/Cys-2011, Cys-2016/Cys-2056, Cys-2042/Cys-2073, Cys-2078/Cys-2121, Cys-2107/Cys-2136, Cys-2141/Cys-2181, Cys-2167/Cys-2194, Cys-2199/Cys-2240, Cys-2226/Cys-2254, Cys-2259/Cys-2299, Cys-2285/Cys-2313, Cys-2318/Cys-2358, Cys-2344/Cys-2371, Cys-2376/Cys-2417, Cys-2403/Cys-2430, Cys-2435/Cys-2475, Cys-2461/Cys-2488, Cys-2493/Cys-2533, Cys-2519/Cys-2546, Cys-2551/Cys-2591, and Cys-2577/Cys-2603. The 40-residue stretch at 1740–1779 (DVDECAVGSDCSEHASCLNTNGSYICSCKPPYTGDGKNCA) folds into the EGF-like 7; calcium-binding domain. Asn-1760 carries N-linked (GlcNAc...) asparagine glycosylation. Sushi domains follow at residues 1776 to 1839 (KNCA…SCEA), 1840 to 1897 (ISCG…VCEL), 1898 to 1955 (VKCS…SCQL), 1956 to 2013 (VSCG…QCLA), 2014 to 2075 (VSCD…RCIA), 2076 to 2138 (HFCE…QCIP), 2139 to 2196 (VRCG…TCHP), 2197 to 2256 (VSCN…SCTP), 2257 to 2315 (LNCG…KCVP), 2316 to 2373 (TKCA…VCKL), 2374 to 2432 (VLCQ…ECVP), 2433 to 2490 (VECP…MCRP), 2491 to 2548 (IECP…SCNA), and 2549 to 2605 (IHCS…TCVP). Residues 2634–2641 (DMMEVPYL) form an important for the interaction with integrin ITGA9:ITGB1 region. 14 consecutive Sushi domains span residues 2659 to 2708 (EESL…SCIS), 2709 to 2766 (IECD…RCEV), 2767 to 2824 (ISCS…VCLP), 2825 to 2882 (VDCG…SCVP), 2883 to 2940 (VRCP…ICKP), 2941 to 2998 (ATCG…SCLP), 2999 to 3054 (CTCS…LCEH), 3055 to 3112 (ADCG…TCEP), 3113 to 3171 (VSCG…NCSP), 3172 to 3231 (KTCP…SCIP), 3232 to 3289 (VVCG…VCRE), 3290 to 3347 (SRCE…LCKP), 3348 to 3406 (NPCP…RCEK), and 3407 to 3463 (ISCG…ICRA). Cystine bridges form between Cys-2679-Cys-2706, Cys-2711-Cys-2751, Cys-2737-Cys-2764, Cys-2769-Cys-2809, Cys-2795-Cys-2822, Cys-2827-Cys-2867, Cys-2853-Cys-2880, Cys-2885-Cys-2925, Cys-2911-Cys-2938, Cys-2943-Cys-2983, Cys-2969-Cys-2996, Cys-3001-Cys-3040, Cys-3026-Cys-3052, Cys-3057-Cys-3097, Cys-3083-Cys-3110, Cys-3115-Cys-3156, Cys-3141-Cys-3169, Cys-3174-Cys-3214, Cys-3200-Cys-3229, Cys-3234-Cys-3274, Cys-3260-Cys-3287, Cys-3292-Cys-3332, Cys-3318-Cys-3345, Cys-3350-Cys-3391, Cys-3377-Cys-3404, Cys-3409-Cys-3449, Cys-3435-Cys-3461, Cys-3497-Cys-3507, Cys-3501-Cys-3513, Cys-3515-Cys-3524, Cys-3529-Cys-3539, Cys-3533-Cys-3545, and Cys-3547-Cys-3556. 2 EGF-like domains span residues 3493–3525 (EEPI…SRCH) and 3526–3557 (TATC…HDCS).

Interacts (via Sushi domain 21) with ITGA9:ITGB1; thereby inhibits Ca(2+) intracellular signaling and as a result represses vasocontraction. Interacts (via Sushi domain 21) with ITGA4:ITGB1; thereby inhibits Ca(2+) intracellular signaling and as a result represses vasocontraction. Interacts with ANGPT1 and ANGPT2. Interacts with PEAR1 (via extracellular domain). Interacts with HSPG2, TLN1, FN1, COPA, CCT2, IQGAP1, LAMC1 and NID1. Interacts (via C-terminus) with TIE1.

It is found in the secreted. The protein resides in the nucleus. It localises to the cytoplasm. Its subcellular location is the membrane. Its function is as follows. Required for morphological development, cell alignment and migration of lymphatic endothelial cells during embryonic development, potentially via modulation of ANGPT2-TIE1 signaling and subsequent activation of FOXC2 transcription. Required for embryonic lymphatic vascular development, via mediating the correct formation of the first lymphovenous contact site and tight association of the lymphatic endothelium with the venous endothelium. Represses PRKCA-mediated L-type voltage-gated channel Ca(2+) influx and ROCK-mediated calcium sensitivity in vascular smooth muscle cells, via its interaction with integrins, thereby inhibiting vasocontraction. Promotes platelet activation, via its interaction with PEAR1 and subsequent activation of AKT/mTOR signaling. Plays a role in epidermal development and keratinocyte differentiation, independent of cell-cell adhesion. May play a role in initial cell attachment of stromal osteogenic cells. May promote myoblast cell adhesion when in the presence of integrin ITGA9:ITGB1. In Rattus norvegicus (Rat), this protein is Sushi, von Willebrand factor type A, EGF and pentraxin domain-containing protein 1 (Svep1).